The chain runs to 1079 residues: Electrogenic sodium bicarbonate cotransporter 1 (1079 aa).

The tract at residues 1-62 is required for interaction with AHCYL1; it reads MEDEAVLDRG…EKREKERISE (62 aa). Topologically, residues 1-466 are cytoplasmic; it reads MEDEAVLDRG…FASDFYDALN (466 aa). Residue Tyr-30 is modified to Phosphotyrosine. A compositionally biased stretch (basic residues) spans 39-52; that stretch reads YRRRRRHKRKTGHK. A disordered region spans residues 39 to 78; it reads YRRRRRHKRKTGHKEKREKERISENYSDKSDVENADESSS. The residue at position 49 (Thr-49) is a Phosphothreonine; by PKA. Over residues 53-70 the composition is skewed to basic and acidic residues; it reads EKREKERISENYSDKSDV. Residues Ser-61, Ser-65, Ser-68, Ser-223, Ser-232, Ser-233, and Ser-245 each carry the phosphoserine modification. Positions 237–265 are disordered; the sequence is MFTSPDNGSPAMTHRNLTSSSLNDISDKP. A phosphothreonine mark is found at Thr-249 and Thr-254. Over residues 251-260 the composition is skewed to polar residues; sequence RNLTSSSLND. Phosphoserine is present on residues Ser-256, Ser-257, and Ser-262. Residues 467–491 traverse the membrane as a helical segment; that stretch reads IQSLSAILFIYLATVTNAITFGGLL. Topologically, residues 492-501 are extracellular; the sequence is GDATDNMQGV. Residues 502–520 traverse the membrane as a helical segment; it reads LESFLGTAVSGAIFCLFAG. Residue Gln-521 is a topological domain, cytoplasmic. Residues 522-542 form a discontinuously helical membrane-spanning segment; sequence PLTILSSTGPVLVFERLLFNF. Over 543–550 the chain is Extracellular; it reads SKDHNFDY. The chain crosses the membrane as a helical span at residues 551-571; it reads LEFRLWIGLWSAFLCLILVAT. Residues 572–585 lie on the Cytoplasmic side of the membrane; sequence DASFLVQYFTRFTE. The helical transmembrane segment at 586–609 threads the bilayer; it reads EGFSSLISFIFIYDAFKKMIKLAD. Residues 610-692 are Extracellular-facing; the sequence is YYPINSDFKV…GNNCNFVPDV (83 aa). The chain crosses the membrane as a helical span at residues 693–710; it reads TLMSFILFLGTYTSSMAL. Residues 711–725 lie on the Cytoplasmic side of the membrane; that stretch reads KKFKTSRYFPTTARK. A helical transmembrane segment spans residues 726–745; the sequence is LISDFAIILSILIFCVIDAL. At 746 to 779 the chain is on the extracellular side; it reads VGVDTPKLIVPSEFKPTSPNRGWFVPPFGGNPWW. The interaction with CA4 stretch occupies residues 748-779; the sequence is VDTPKLIVPSEFKPTSPNRGWFVPPFGGNPWW. A helical transmembrane segment spans residues 780–807; that stretch reads VYLAAAIPALLVTILIFMDQQITAVIVN. The Cytoplasmic segment spans residues 808–819; the sequence is RKEHKLKKGAGY. The helical transmembrane segment at 820-836 threads the bilayer; sequence HLDLFWVAILMVVCSFM. A topological domain (extracellular) is located at residue Ala-837. The chain crosses the membrane as a discontinuously helical span at residues 838-855; that stretch reads LPWYVAATVISIAHIDSL. The Cytoplasmic portion of the chain corresponds to 856 to 877; sequence KMETETSAPGEQPKFLGVREQR. The helical transmembrane segment at 878–894 threads the bilayer; sequence VTGTLVFILTGLSVFMA. At 895–901 the chain is on the extracellular side; sequence PILKFIP. A helical transmembrane segment spans residues 902-918; that stretch reads MPVLYGVFLYMGVASLN. The Cytoplasmic portion of the chain corresponds to 919–960; the sequence is GVQFMDRLKLLLMPLKHQPDFIYLRHVPLRRVHLFTFLQVLC. The discontinuously helical intramembrane region spans 961–986; the sequence is LALLWILKSTVAAIIFPVMILALVAV. The Cytoplasmic segment spans residues 987 to 1079; the sequence is RKGMDYLFSQ…STFLERHTSC (93 aa). A CA2-binding region spans residues 1002 to 1004; the sequence is LDD. Positions 1012–1079 are disordered; it reads KKKEDEKKKK…STFLERHTSC (68 aa). Ser-1026 is subject to Phosphoserine; by PKA. Ser-1029 is modified (phosphoserine). The segment at 1030 to 1033 is CA2-binding; the sequence is DNDD. A phosphoserine mark is found at Ser-1034 and Ser-1044. The interval 1057-1059 is required for basolateral targeting; sequence FLS. The span at 1062 to 1079 shows a compositional bias: basic and acidic residues; the sequence is KPSDREKSSTFLERHTSC. Ser-1069 is modified (phosphoserine).

Belongs to the anion exchanger (TC 2.A.31) family. As to quaternary structure, homodimer. Interacts with CA2/carbonic anhydrase 2 and CA4/carbonic anhydrase 4 which may regulate transporter activity. Isoform 1 but not isoform 2 interacts with AHCYL1 (via PEST domain when phosphorylated); the interaction increases SLC4A4 isoform 1 activity. Interacts with AHCYL2. Phosphorylation of Ser-1026 by PKA increases the binding of CA2 and changes the Na(+):HCO3(-) stoichiometry of the transporter from 3:1 to 2:1. Phosphorylated in presence of STK39 and dephosphorylated in presence of PP1 phosphatase; phosphorylation seems to inhibit SLC4A4 activity. Post-translationally, N-glycosylated. May not be necessary for the transporter basic functions. In terms of tissue distribution, expressed in colonic mucosa, kidney cortex and to gastric mucosa.

It is found in the basolateral cell membrane. It localises to the cell membrane. It carries out the reaction 2 hydrogencarbonate(out) + Na(+)(out) = 2 hydrogencarbonate(in) + Na(+)(in). The enzyme catalyses 3 hydrogencarbonate(out) + Na(+)(out) = 3 hydrogencarbonate(in) + Na(+)(in). Functionally, electrogenic sodium/bicarbonate cotransporter with a Na(+):HCO3(-) stoichiometry varying from 1:2 to 1:3. May regulate bicarbonate influx/efflux at the basolateral membrane of cells and regulate intracellular pH. In Oryctolagus cuniculus (Rabbit), this protein is Electrogenic sodium bicarbonate cotransporter 1 (SLC4A4).